A 139-amino-acid polypeptide reads, in one-letter code: Protein cornichon homolog 4 (139 aa).

3 helical membrane passes run 5-25 (VFVFSLLDCCALIFLSVYFII), 57-77 (LVTVLMLISLHWFIFLLNLPV), and 118-138 (LGFHLLCFFMYLYSMILALIN).

The protein belongs to the cornichon family. As to quaternary structure, interacts with Sec23/24 complex components SEC24B and SEC24D. Interacts with CCR5. Interacts with ADRB2 in the early secretory pathway.

It localises to the membrane. Its subcellular location is the endoplasmic reticulum. It is found in the endoplasmic reticulum-Golgi intermediate compartment. Involved in G protein-coupled receptors (GPCRs) trafficking from the endoplasmic reticulum to the cell surface; it promotes the exit of GPCRs from the early secretory pathway, likely through interaction with the COPII machinery. In Bos taurus (Bovine), this protein is Protein cornichon homolog 4 (CNIH4).